Here is a 976-residue protein sequence, read N- to C-terminus: Villin-2 (976 aa).

Gelsolin-like repeat units lie at residues 27 to 77 (FEAV…DEAG), 148 to 188 (IRLK…QERA), 260 to 302 (GKME…DERK), 399 to 450 (GKVK…EDQD), 531 to 571 (NKAV…EQLE), and 633 to 674 (FQVE…KEKQ). The interval 769 to 917 (NSSSNRPAYS…SEIQPSGATF (149 aa)) is disordered. Residues 782–794 (RLNESHDGPRQRA) show a composition bias toward basic and acidic residues. Composition is skewed to low complexity over residues 795 to 812 (EALA…SSTK), 823 to 841 (SQAS…VLVA), and 848 to 858 (DTSPTRRSTSS). A Phosphoserine modification is found at serine 890. Positions 908–917 (SEIQPSGATF) are enriched in polar residues. One can recognise an HP domain in the interval 911–976 (QPSGATFTYE…DLLKKKFDLF (66 aa)).

It belongs to the villin/gelsolin family. As to expression, expressed in all tissues examined. Mainly detected in the root epidermis and vasculature. Expressed in the root cap.

It is found in the cytoplasm. It localises to the cytoskeleton. In terms of biological role, ca(2+)-regulated actin-binding protein. Involved in actin filaments bundling. Caps the barbed end of actin filaments and is able to sever them in a calcium-dependent manner. Required for the construction of actin collars in pollen tubes. Acts redundantly with VLN5 (AC Q9LVC6) to generate thick actin filament bundles and to regulate polarized pollen tube growth. Acts redundantly with VLN3 (AC O81645) to regulate directional organ growth and in sclerenchyma development. The chain is Villin-2 from Arabidopsis thaliana (Mouse-ear cress).